The primary structure comprises 311 residues: Cell division protein ZipA (311 aa).

At M1–L6 the chain is on the periplasmic side. A helical transmembrane segment spans residues V7–I27. Over R28 to D311 the chain is Cytoplasmic. Residues D46–R114 are disordered. 2 stretches are compositionally biased toward basic and acidic residues: residues G62–V83 and R94–Q103.

The protein belongs to the ZipA family. Interacts with FtsZ via their C-terminal domains.

The protein localises to the cell inner membrane. In terms of biological role, essential cell division protein that stabilizes the FtsZ protofilaments by cross-linking them and that serves as a cytoplasmic membrane anchor for the Z ring. Also required for the recruitment to the septal ring of downstream cell division proteins. In Shewanella woodyi (strain ATCC 51908 / MS32), this protein is Cell division protein ZipA.